The chain runs to 304 residues: MRLPIFLDTDPGIDDAVAIAAAIFAPELDLQLMTTVAGNVSVEKTTRNALQLLHFWNAEIPLAQGAAVPLVRAPRDAASVHGESGMAGYDFVEHNRKPLGIPAFLAIRDALMRAPEPVTLVAIGPLTNIALLLSQCPECKPYIRRLVIMGGSAGRGNCTPNAEFNIAADPEAAACVFRSGIEIVMCGLDVTNQAILTPDYLATLPELNRTGKMLHALFSHYRSGSMQSGLRMHDLCAIALLVRPELFTLKPCFVAVETQGEFTSGTTVVDIDGCLGKPANVKVALDLDVKGFQQWVAEVLALAS.

Histidine 233 is a catalytic residue.

This sequence belongs to the IUNH family. RihC subfamily.

Its function is as follows. Hydrolyzes both purine and pyrimidine ribonucleosides with a broad-substrate specificity. In Shigella boydii serotype 18 (strain CDC 3083-94 / BS512), this protein is Non-specific ribonucleoside hydrolase RihC.